The chain runs to 56 residues: Large ribosomal subunit protein bL33 (56 aa).

Over residues 1 to 12 (MASKGGRDKIKL) the composition is skewed to basic and acidic residues. The segment at 1–28 (MASKGGRDKIKLESTAGTGHFYTTTKNK) is disordered. Positions 15–25 (TAGTGHFYTTT) are enriched in polar residues.

It belongs to the bacterial ribosomal protein bL33 family.

In Cupriavidus necator (strain ATCC 17699 / DSM 428 / KCTC 22496 / NCIMB 10442 / H16 / Stanier 337) (Ralstonia eutropha), this protein is Large ribosomal subunit protein bL33.